A 299-amino-acid chain; its full sequence is Transcription factor srbB (299 aa).

Disordered stretches follow at residues 1-33 and 81-204; these read MAYN…DPLS and ISGF…NAAK. A compositionally biased stretch (low complexity) spans 161–170; sequence PVTSQATTSP. Over residues 188–199 the composition is skewed to polar residues; that stretch reads RSLSTDSQTATG. Positions 203-216 are basic motif; it reads AKRAAHNIIEKRYR. The region spanning 203-264 is the bHLH domain; it reads AKRAAHNIIE…TNAIAYMQEL (62 aa). The segment at 217–264 is helix-loop-helix motif; the sequence is TNMNAKFVALEKAMSGSGVQKPTKGGSGPASLKKSEILTNAIAYMQEL. The stretch at 254–281 forms a coiled coil; the sequence is LTNAIAYMQELQDQNAALQKELALLKQN.

The protein localises to the nucleus. Functionally, key transcription factors critical for hypoxia adaptation and virulence. Plays a major role in regulation of heme biosynthesis and carbohydrate metabolism early in the response to hypoxia. The sequence is that of Transcription factor srbB from Aspergillus fumigatus (strain ATCC MYA-4609 / CBS 101355 / FGSC A1100 / Af293) (Neosartorya fumigata).